The sequence spans 544 residues: Pentatricopeptide repeat-containing protein At1g66345, mitochondrial (544 aa).

The transit peptide at 1-116 (MASALRRLVE…RNLRHGIKSY (116 aa)) directs the protein to the mitochondrion. PPR repeat units follow at residues 163-197 (TPLV…GFTL), 198-232 (SVIT…RIYP), 233-267 (NEIT…RCLP), 268-302 (SVIV…NMVV), 303-337 (DTIG…GFSA), 338-372 (NSFV…GVSP), 373-407 (YDET…GLMP), 408-442 (SCSA…GFVP), 443-477 (DEHT…KMSP), 478-512 (GFEV…LIEP), and 513-544 (NADI…ISVR).

Belongs to the PPR family. P subfamily.

The protein localises to the mitochondrion. This Arabidopsis thaliana (Mouse-ear cress) protein is Pentatricopeptide repeat-containing protein At1g66345, mitochondrial.